Here is a 289-residue protein sequence, read N- to C-terminus: uncharacterized protein (289 aa).

This is an uncharacterized protein from Acanthamoeba polyphaga mimivirus (APMV).